The sequence spans 379 residues: Anhydro-N-acetylmuramic acid kinase (379 aa).

An ATP-binding site is contributed by 9–16 (GTSADGVD).

It belongs to the anhydro-N-acetylmuramic acid kinase family.

It carries out the reaction 1,6-anhydro-N-acetyl-beta-muramate + ATP + H2O = N-acetyl-D-muramate 6-phosphate + ADP + H(+). The protein operates within amino-sugar metabolism; 1,6-anhydro-N-acetylmuramate degradation. It participates in cell wall biogenesis; peptidoglycan recycling. Functionally, catalyzes the specific phosphorylation of 1,6-anhydro-N-acetylmuramic acid (anhMurNAc) with the simultaneous cleavage of the 1,6-anhydro ring, generating MurNAc-6-P. Is required for the utilization of anhMurNAc either imported from the medium or derived from its own cell wall murein, and thus plays a role in cell wall recycling. This is Anhydro-N-acetylmuramic acid kinase from Prochlorococcus marinus (strain MIT 9313).